The sequence spans 318 residues: 4-diphosphocytidyl-2-C-methyl-D-erythritol kinase (318 aa).

K25 is an active-site residue. 110–120 (PVAGGMAGGSA) contributes to the ATP binding site. Residue D152 is part of the active site.

The protein belongs to the GHMP kinase family. IspE subfamily.

The enzyme catalyses 4-CDP-2-C-methyl-D-erythritol + ATP = 4-CDP-2-C-methyl-D-erythritol 2-phosphate + ADP + H(+). Its pathway is isoprenoid biosynthesis; isopentenyl diphosphate biosynthesis via DXP pathway; isopentenyl diphosphate from 1-deoxy-D-xylulose 5-phosphate: step 3/6. Catalyzes the phosphorylation of the position 2 hydroxy group of 4-diphosphocytidyl-2C-methyl-D-erythritol. The chain is 4-diphosphocytidyl-2-C-methyl-D-erythritol kinase from Mycobacterium tuberculosis (strain ATCC 25177 / H37Ra).